We begin with the raw amino-acid sequence, 447 residues long: N-succinylarginine dihydrolase (447 aa).

Substrate contacts are provided by residues 19-28 (AGLSFGNEAS), N110, and 137-138 (HR). The active site involves E174. Residue R212 coordinates substrate. The active site involves H248. Substrate-binding residues include D250 and N359. C365 functions as the Nucleophile in the catalytic mechanism.

The protein belongs to the succinylarginine dihydrolase family. Homodimer.

It catalyses the reaction N(2)-succinyl-L-arginine + 2 H2O + 2 H(+) = N(2)-succinyl-L-ornithine + 2 NH4(+) + CO2. The protein operates within amino-acid degradation; L-arginine degradation via AST pathway; L-glutamate and succinate from L-arginine: step 2/5. In terms of biological role, catalyzes the hydrolysis of N(2)-succinylarginine into N(2)-succinylornithine, ammonia and CO(2). The sequence is that of N-succinylarginine dihydrolase from Escherichia coli O17:K52:H18 (strain UMN026 / ExPEC).